A 576-amino-acid polypeptide reads, in one-letter code: 5'-nucleotidase (576 aa).

The N-terminal stretch at 1 to 28 (MRPAAATAPKWLLLALSALLPLWPTAKS) is a signal peptide. Zn(2+)-binding residues include aspartate 38 and histidine 40. A disulfide bridge links cysteine 53 with cysteine 59. An N-linked (GlcNAc...) asparagine glycan is attached at asparagine 55. The Zn(2+) site is built by aspartate 87, asparagine 119, histidine 222, and histidine 245. N-linked (GlcNAc...) asparagine glycosylation is found at asparagine 313, asparagine 335, and asparagine 349. 2 disulfides stabilise this stretch: cysteine 355/cysteine 360 and cysteine 367/cysteine 389. AMP is bound at residue arginine 356. Arginine 356 contributes to the IMP binding site. Residues asparagine 392 and arginine 397 each coordinate AMP. 2 residues coordinate IMP: asparagine 392 and arginine 397. Residue asparagine 405 is glycosylated (N-linked (GlcNAc...) asparagine). Phenylalanine 419 contributes to the AMP binding site. Phenylalanine 419 lines the IMP pocket. A disulfide bond links cysteine 478 and cysteine 481. 2 residues coordinate AMP: tyrosine 502 and aspartate 508. Positions 502 and 508 each coordinate IMP. A lipid anchor (GPI-anchor amidated serine) is attached at serine 551. A propeptide spans 552–576 (AASHYQGSFPLIILSFWAVILVLYQ) (removed in mature form).

Belongs to the 5'-nucleotidase family. Homodimer. Requires Zn(2+) as cofactor. As to expression, expressed in the brain.

The protein localises to the cell membrane. It catalyses the reaction a ribonucleoside 5'-phosphate + H2O = a ribonucleoside + phosphate. It carries out the reaction a 2'-deoxyribonucleoside 5'-phosphate + H2O = a 2'-deoxyribonucleoside + phosphate. The catalysed reaction is dTMP + H2O = thymidine + phosphate. The enzyme catalyses CMP + H2O = cytidine + phosphate. It catalyses the reaction IMP + H2O = inosine + phosphate. It carries out the reaction AMP + H2O = adenosine + phosphate. The catalysed reaction is GMP + H2O = guanosine + phosphate. The enzyme catalyses UMP + H2O = uridine + phosphate. It catalyses the reaction dAMP + H2O = 2'-deoxyadenosine + phosphate. It carries out the reaction dCMP + H2O = 2'-deoxycytidine + phosphate. In terms of biological role, catalyzes the hydrolysis of nucleotide monophosphates, releasing inorganic phosphate and the corresponding nucleoside. AMP is the preferred substrate but can also hydrolyze CMP and GMP. Shows a preference for ribonucleotide monophosphates over their equivalent deoxyribose forms. Other substrates include IMP, UMP, dAMP, dCMP, dTMP, NAD and NMN. This is 5'-nucleotidase (Nt5e) from Rattus norvegicus (Rat).